A 505-amino-acid chain; its full sequence is MAPTRVTHPPDDGRGEHFRVRIEGFGVGTWDLDLKTWALDWSDTARTLLGIGQDQPASYDLFLSRLEPDDRERVESAIKRVSERGGGFDVSFRVAGTSNAGQWIRARAGLIRDEAGTARHLSGIFLDIDEEKQVEGALRTRETHLRSILHTIPDAMIVIDGHGIIQLFSTAAERLFGWSELEAIGQNVNILMPEPDRSRHDSYISRYRTTSDPHIIGIGRIVTGKRRDGTTFPMHLSIGEMQSGGEPYFTGFVRDLTEHQQTQARLQELQSELVHVSRLSAMGEMASALAHELNQPLAAISNYMKGSRRLLAGSSDPNTPKVESALDRAAEQALRAGQIIRRLRDFVARGESEKRVESLSKLIEEAGALGLAGAREQNVQLRFSLDPGADLVLADRVQIQQVLVNLFRNALEAMAQSQRRELVVTNTPAADDMIEVEVSDTGSGFQDDVIPNLFQTFFTTKDTGMGVGLSISRSIIEAHGGRMWAESNASGGATFRFTLPAADEN.

Positions 14–85 (RGEHFRVRIE…SAIKRVSERG (72 aa)) constitute a PAS 1 domain. The PAC 1 domain maps to 88–140 (FDVSFRVAGTSNAGQWIRARAGLIRDEAGTARHLSGIFLDIDEEKQVEGALRT). The 68-residue stretch at 141–208 (RETHLRSILH…RHDSYISRYR (68 aa)) folds into the PAS 2 domain. His-200 contributes to the heme binding site. The PAC 2 domain maps to 209–268 (TTSDPHIIGIGRIVTGKRRDGTTFPMHLSIGEMQSGGEPYFTGFVRDLTEHQQTQARLQE). Residues 288 to 503 (ALAHELNQPL…TFRFTLPAAD (216 aa)) enclose the Histidine kinase domain. A Phosphohistidine; by autocatalysis modification is found at His-291.

Heme is required as a cofactor.

It carries out the reaction ATP + protein L-histidine = ADP + protein N-phospho-L-histidine.. Its activity is regulated as follows. The heme moiety regulates the kinase activity. Putative oxygen sensor; modulates the activity of FixJ, a transcriptional activator of nitrogen fixation fixK gene. FixL probably acts as a kinase that phosphorylates FixJ. This is Sensor protein FixL (fixL) from Bradyrhizobium diazoefficiens (strain JCM 10833 / BCRC 13528 / IAM 13628 / NBRC 14792 / USDA 110).